The following is a 518-amino-acid chain: MIYHINMDKHSLIDLYNNEVLTDCQLHLTDSIETIVMNVHKNILYMSCPYFKSMFTNFREQKSSTVKLDVHNARITYDIVKSFYGFPLEEPNWKYQIDTHIVKDFLLLETGLENINLLPIPAEDFDNFIDVVDKIGYNEFCLKKIIDNIPDNYDLSKFPLDLLNGLLAVCFKYDLHISRETGVYIWSFKYNKLVLSYFDSSIIDIEQTFDGGFYFSSSTIIDSNHEESSDDEVNDDEDTDNEDTDDEGYCQISLFKFNISRTNDKYEASILNTGLKIIGPIAYSKHFNQVFIVTDKYNICVYDTDIKNLVNKFVFNDTIEIIAPIKDKMVVVTSIQIIILNLLDGKNLSKIDSNTNIISYNSNLGVFAYINNNTNVCIYSLESLSITTNINHSTTINHILYSPKSKYFIFCDENSIIYVYSTKDNYSLIKTIDFKKFLKFGVKDFEFMTSKIIVAIDIKGKICIWNIETEQIIQNIDCSEDYNNIYNIQKINGPDYSIHKKISKIIQEKTQSKLSISS.

The BTB domain occupies 22–92 (TDCQLHLTDS…FYGFPLEEPN (71 aa)). The interval 224 to 246 (NHEESSDDEVNDDEDTDNEDTDD) is disordered. Residues 228–246 (SSDDEVNDDEDTDNEDTDD) are compositionally biased toward acidic residues. 2 WD repeats span residues 391–430 (NHST…SLIK) and 437–475 (FLKF…IIQN).

This sequence belongs to the mimivirus BTB/WD family.

This is Putative BTB/POZ domain and WD-repeat protein R731 from Acanthamoeba polyphaga (Amoeba).